Consider the following 444-residue polypeptide: Tubulin beta-8 chain (444 aa).

Positions 1 to 4 (MREI) match the MREI motif motif. GTP is bound by residues Gln11, Glu69, Ser138, Gly142, Thr143, and Gly144. Glu69 lines the Mg(2+) pocket. Ser172 is subject to Phosphoserine; by CDK1. Asn204 and Asn226 together coordinate GTP. 5-glutamyl polyglutamate is present on Glu436.

The protein belongs to the tubulin family. Dimer of alpha and beta chains. A typical microtubule is a hollow water-filled tube with an outer diameter of 25 nm and an inner diameter of 15 nM. Alpha-beta heterodimers associate head-to-tail to form protofilaments running lengthwise along the microtubule wall with the beta-tubulin subunit facing the microtubule plus end conferring a structural polarity. Microtubules usually have 13 protofilaments but different protofilament numbers can be found in some organisms and specialized cells. Mg(2+) serves as cofactor. Some glutamate residues at the C-terminus are polyglycylated, resulting in polyglycine chains on the gamma-carboxyl group. Glycylation is mainly limited to tubulin incorporated into axonemes (cilia and flagella) whereas glutamylation is prevalent in neuronal cells, centrioles, axonemes, and the mitotic spindle. Both modifications can coexist on the same protein on adjacent residues, and lowering polyglycylation levels increases polyglutamylation, and reciprocally. Cilia and flagella glycylation is required for their stability and maintenance. Flagella glycylation controls sperm motility. In terms of processing, some glutamate residues at the C-terminus are polyglutamylated, resulting in polyglutamate chains on the gamma-carboxyl group. Polyglutamylation plays a key role in microtubule severing by spastin (SPAST). SPAST preferentially recognizes and acts on microtubules decorated with short polyglutamate tails: severing activity by SPAST increases as the number of glutamates per tubulin rises from one to eight, but decreases beyond this glutamylation threshold. Glutamylation is also involved in cilia motility. Post-translationally, phosphorylated on Ser-172 by CDK1 during the cell cycle, from metaphase to telophase, but not in interphase. This phosphorylation inhibits tubulin incorporation into microtubules.

Its subcellular location is the cytoplasm. It is found in the cytoskeleton. It localises to the spindle. In terms of biological role, tubulin is the major constituent of microtubules, a cylinder consisting of laterally associated linear protofilaments composed of alpha- and beta-tubulin heterodimers. Microtubules grow by the addition of GTP-tubulin dimers to the microtubule end, where a stabilizing cap forms. Below the cap, tubulin dimers are in GDP-bound state, owing to GTPase activity of alpha-tubulin. Has a key role in meiotic spindle assembly and oocyte maturation. This chain is Tubulin beta-8 chain (TUBB8), found in Papio hamadryas (Hamadryas baboon).